Consider the following 124-residue polypeptide: Prefoldin subunit beta (124 aa).

This sequence belongs to the prefoldin subunit beta family. As to quaternary structure, heterohexamer of two alpha and four beta subunits.

Its subcellular location is the cytoplasm. Its function is as follows. Molecular chaperone capable of stabilizing a range of proteins. Seems to fulfill an ATP-independent, HSP70-like function in archaeal de novo protein folding. This Thermoplasma volcanium (strain ATCC 51530 / DSM 4299 / JCM 9571 / NBRC 15438 / GSS1) protein is Prefoldin subunit beta (pfdB).